The following is an 805-amino-acid chain: Muscarinic acetylcholine receptor DM1 (805 aa).

Topologically, residues 1 to 100 are extracellular; that stretch reads MEPVMSLALA…GFETKGPRYS (100 aa). Positions 27-43 are enriched in low complexity; it reads TSTTTTTTTTTSTTTTT. A disordered region spans residues 27-47; the sequence is TSTTTTTTTTTSTTTTTASPA. N-linked (GlcNAc...) asparagine glycosylation is found at asparagine 65, asparagine 84, and asparagine 87. Residues 101–121 traverse the membrane as a helical segment; that stretch reads LASMVVMGFVAAILSTVTVAG. At 122 to 141 the chain is on the cytoplasmic side; that stretch reads NVMVMISFKIDKQLQTISNY. The chain crosses the membrane as a helical span at residues 142–162; it reads FLFSLAIADFAIGAISMPLFA. The Extracellular portion of the chain corresponds to 163–177; the sequence is VTTILGYWPLGPIVC. The chain crosses the membrane as a helical span at residues 178 to 198; sequence DTWLALDYLASNASVLNLLII. Over 199-220 the chain is Cytoplasmic; sequence SFDRYFSVTRPLTYRAKRTTNR. Residues 221–241 traverse the membrane as a helical segment; it reads AAVMIGAAWGISLLLWPPWIY. The Extracellular segment spans residues 242-266; that stretch reads SWPYIEGKRTVPKDECYIQFIETNQ. The helical transmembrane segment at 267 to 287 threads the bilayer; it reads YITFGTALAAFYFPVTIMCFL. At 288-718 the chain is on the cytoplasmic side; that stretch reads YWRIWRETKK…KRQESKAAKT (431 aa). Disordered regions lie at residues 302-322, 340-359, and 507-530; these read LPNLQAGKKDSSKRSNSSDEN, GNDHDTWRRPRSESSPDAES, and GNGNGAINNNNNASHNGNGAVNGN. Basic and acidic residues-rich tracts occupy residues 308–318 and 341–353; these read GKKDSSKRSNS and NDHDTWRRPRSES. Low complexity predominate over residues 507 to 525; the sequence is GNGNGAINNNNNASHNGNG. Residues 719–739 form a helical membrane-spanning segment; it reads LSAILLSFIITWTPYNILVLI. The Extracellular portion of the chain corresponds to 740-752; that stretch reads KPLTTCSDCIPTE. A helical membrane pass occupies residues 753-773; sequence LWDFFYALCYINSTINPMCYA. Residues 774–805 are Cytoplasmic-facing; that stretch reads LCNATFRRTYVRILTCKWHTRNREGMVRGVYN.

It belongs to the G-protein coupled receptor 1 family. Muscarinic acetylcholine receptor subfamily. In terms of tissue distribution, intense staining in the glomeruli of the antennal lobes, the region of the nervous system containing terminals of antennal olfactory sensory neurons and mechanosensory neurons. Also a discrete group of neurosecretory cells in the pars intercerebralis of the brain.

Its subcellular location is the cell membrane. The protein resides in the postsynaptic cell membrane. The muscarinic acetylcholine receptor mediates various cellular responses, including inhibition of adenylate cyclase, breakdown of phosphoinositides and modulation of potassium channels through the action of G proteins. Primary transducing effect is Pi turnover. May have a role in the processing of olfactory and mechanosensory signals; regulation of neurosecretion. The polypeptide is Muscarinic acetylcholine receptor DM1 (mAChR-A) (Drosophila melanogaster (Fruit fly)).